The chain runs to 558 residues: Formate--tetrahydrofolate ligase (558 aa).

Residue 67-74 (TPAGEGKT) participates in ATP binding.

This sequence belongs to the formate--tetrahydrofolate ligase family.

It carries out the reaction (6S)-5,6,7,8-tetrahydrofolate + formate + ATP = (6R)-10-formyltetrahydrofolate + ADP + phosphate. It functions in the pathway one-carbon metabolism; tetrahydrofolate interconversion. The protein is Formate--tetrahydrofolate ligase of Ruegeria pomeroyi (strain ATCC 700808 / DSM 15171 / DSS-3) (Silicibacter pomeroyi).